Reading from the N-terminus, the 657-residue chain is UvrABC system protein B (657 aa).

Residues 25 to 163 (ASIKNGNKYQ…QGMVLFLEIN (139 aa)) form the Helicase ATP-binding domain. 38-45 (GVTGSGKT) contributes to the ATP binding site. A Beta-hairpin motif is present at residues 91–114 (YYDYYQPEAYIPRQDLFIEKDSSI). Residues 130–133 (LSFD) carry the DEAD box motif. In terms of domain architecture, Helicase C-terminal spans 433-599 (QVEILYDMAK…SVSRNVEESL (167 aa)). One can recognise a UVR domain in the interval 622 to 657 (AKIVKDLRKQMMEAADKLEFEKAAALRDEIKKMRKL).

It belongs to the UvrB family. As to quaternary structure, forms a heterotetramer with UvrA during the search for lesions. Interacts with UvrC in an incision complex.

The protein resides in the cytoplasm. Its function is as follows. The UvrABC repair system catalyzes the recognition and processing of DNA lesions. A damage recognition complex composed of 2 UvrA and 2 UvrB subunits scans DNA for abnormalities. Upon binding of the UvrA(2)B(2) complex to a putative damaged site, the DNA wraps around one UvrB monomer. DNA wrap is dependent on ATP binding by UvrB and probably causes local melting of the DNA helix, facilitating insertion of UvrB beta-hairpin between the DNA strands. Then UvrB probes one DNA strand for the presence of a lesion. If a lesion is found the UvrA subunits dissociate and the UvrB-DNA preincision complex is formed. This complex is subsequently bound by UvrC and the second UvrB is released. If no lesion is found, the DNA wraps around the other UvrB subunit that will check the other stand for damage. The chain is UvrABC system protein B from Campylobacter hominis (strain ATCC BAA-381 / DSM 21671 / CCUG 45161 / LMG 19568 / NCTC 13146 / CH001A).